A 547-amino-acid chain; its full sequence is Oncoprotein-induced transcript 3 protein (547 aa).

The N-terminal stretch at 1–19 is a signal peptide; that stretch reads MPQLLLLACLLIIVTRVAP. N89 and N116 each carry an N-linked (GlcNAc...) asparagine glycan. Residues 182–222 enclose the EGF-like; calcium-binding domain; that stretch reads DENECEQNNGGCSEICVNLKNSYRCECGIGRVLRSDGKTCE. Disulfide bonds link C186-C197, C193-C206, and C208-C221. Positions 267–516 constitute a ZP domain; sequence FCKSNTIEVS…SRCAQGCHRR (250 aa). Residue N299 is glycosylated (N-linked (GlcNAc...) asparagine). The disordered stretch occupies residues 520–547; it reads EASTEGEDASGPRSQMLTGGPISIDWED.

The protein localises to the nucleus envelope. Its function is as follows. May be involved in hepatocellular function and development. This chain is Oncoprotein-induced transcript 3 protein (OIT3), found in Bos taurus (Bovine).